A 648-amino-acid polypeptide reads, in one-letter code: FAD-binding monooxygenase trt3 (648 aa).

FAD is bound by residues 118–121 (TWYW), 130–131 (DI), and Tyr-136. 128–130 (MCD) is a binding site for NADP(+). NADP(+) contacts are provided by residues 274–280 (TGSTAVQ) and 297–298 (RT).

It belongs to the FAD-binding monooxygenase family. Requires FAD as cofactor.

Its pathway is secondary metabolite biosynthesis; terpenoid biosynthesis. Its function is as follows. FAD-binding monooxygenase; part of the gene cluster that mediates the biosynthesis of terretonin, a fungal meroterpenoid that acts as a mycotoxin. The first step of the pathway is the synthesis of 3,5-dimethylorsellinic acid (DMOA) by the polyketide synthase trt4. DMOA is then prenylated into farnesyl-DMOA by the polyprenyl transferase trt2. Methylation by the methyltransferase trt5 then leads to farnesyl-DMOA methyl ester which is further subject to epoxidation by the FAD-dependent monooxygenase trt8 to yield epoxyfarnesyl-DMOA methyl ester. Cyclization of epoxyfarnesyl-DMOA methyl ester by the terpene cyclase trt1 leads to a tetracycle intermediate which is in turn converted to preterretonin. Dehydrogenase trt9 comes next to transform preterretonin to preterrenoid. The FAD-dependent monooxygenase trt3 is then required for the C-hydroxylation at C16 of preterrenoid to yield terrenoid. The cytochrome P450 trt6 catalyzes three successive oxidations to transform terrenoid into an unstable intermediate, which then undergoes the D-ring expansion and unusual rearrangement of the methoxy group to afford the core skeleton of terretonin. Trt14 catalyzes the D-ring expansion of terretonin involving intramolecular methoxy rearrangement as well as the hydrolysis of the expanded D-ring and the methyl ester moiety. Finally, the nonheme iron-dependent dioxygenase trt7 accomplishes the last two oxidation reactions steps to complete the biosynthesis of terretonin. Terretonin C is produced via spontaneous decarboxylation of the terretonin precursor. Another shunt product of the terretonin biosynthesis is dihydrofarnesyl-DMOA, derived from epoxyfarnesyl-DMOA through hydrolysis of the epoxide. In Aspergillus terreus (strain NIH 2624 / FGSC A1156), this protein is FAD-binding monooxygenase trt3.